The primary structure comprises 401 residues: Argininosuccinate synthase (401 aa).

ATP is bound by residues 11-19 (AYSGGLDTS) and Ala-38. 2 residues coordinate L-citrulline: Tyr-89 and Ser-94. Gly-119 is a binding site for ATP. Residues Thr-121, Asn-125, and Asp-126 each coordinate L-aspartate. Asn-125 is a binding site for L-citrulline. L-citrulline is bound by residues Arg-129, Ser-180, Ser-189, Glu-265, and Tyr-277.

It belongs to the argininosuccinate synthase family. Type 1 subfamily. Homotetramer.

Its subcellular location is the cytoplasm. It carries out the reaction L-citrulline + L-aspartate + ATP = 2-(N(omega)-L-arginino)succinate + AMP + diphosphate + H(+). Its pathway is amino-acid biosynthesis; L-arginine biosynthesis; L-arginine from L-ornithine and carbamoyl phosphate: step 2/3. The polypeptide is Argininosuccinate synthase (Syntrophus aciditrophicus (strain SB)).